The chain runs to 334 residues: MSGFYHKHFLKLLDFTPAELNSLLQLAAKLKADKKSGKEEAKLTGKNIALIFEKDSTRTRCSFEVAAYDQGARVTYLGPSGSQIGHKESIKDTARVLGRMYDGIQYRGYGQEIAETLAEYAGVPVWNGLTNEFHPTQLLADLLTMQEHLPGKAFNEMTLVYAGDARNNMGNSMLEAAALTGLDLRLVAPQACWPEAALVTECRALAQQNGGNITLTEDVAKGVEGADFIYTDVWVSMGEAKEKWAERIALLRDYQVNSKMMQLTGNPEVKFLHCLPAFHDDQTTLGKKMAEEFGLHGGMEVTDEVFESAASIVFDQAENRMHTIKAVMVATLSK.

Residues 56–59, Gln83, Arg107, and 134–137 contribute to the carbamoyl phosphate site; these read STRT and HPTQ. L-ornithine is bound by residues Asn168, Asp232, and 236-237; that span reads SM. Residues 274–275 and Arg320 each bind carbamoyl phosphate; that span reads CL.

The protein belongs to the aspartate/ornithine carbamoyltransferase superfamily. OTCase family.

The protein resides in the cytoplasm. The enzyme catalyses carbamoyl phosphate + L-ornithine = L-citrulline + phosphate + H(+). It functions in the pathway amino-acid biosynthesis; L-arginine biosynthesis; L-arginine from L-ornithine and carbamoyl phosphate: step 1/3. Reversibly catalyzes the transfer of the carbamoyl group from carbamoyl phosphate (CP) to the N(epsilon) atom of ornithine (ORN) to produce L-citrulline. This Shigella boydii serotype 4 (strain Sb227) protein is Ornithine carbamoyltransferase.